Consider the following 168-residue polypeptide: Mitochondrial import inner membrane translocase subunit TIM14 (168 aa).

Polar residues predominate over residues 1 to 12 (MSSQSNTGNSIE). The tract at residues 1-29 (MSSQSNTGNSIEAPQLPIPGQTNGSANVT) is disordered. Topologically, residues 1–65 (MSSQSNTGNS…QALNYMGEHP (65 aa)) are mitochondrial intermembrane. The helical transmembrane segment at 66–83 (VITGFGAFLTLYFTAGAY) threads the bilayer. Residues 84–168 (KSISKGLNGG…DFLEKRGISK (85 aa)) lie on the Mitochondrial matrix side of the membrane. The 57-residue stretch at 112–168 (EALQILNLTENTLTKKKLKEVHRKIMLANHPDKGGSPFLATKINEAKDFLEKRGISK) folds into the J domain.

It belongs to the TIM14 family. As to quaternary structure, homodimer and heterodimer with PAM16/TIM16. Homodimerization may not be relevant in vivo, while heterodimerization is essential for activity regulation of mtHSP70. Component of the PAM complex, at least composed of mtHsp70, MGE1, TIM44, PAM16, PAM17 and PAM18/TIM14. Interacts directly with mtHsp70. Interacts directly with TIM17 subunit of the TIM23 complex.

Its subcellular location is the mitochondrion inner membrane. In terms of biological role, essential component of the PAM complex, a complex required for the translocation of transit peptide-containing proteins from the inner membrane into the mitochondrial matrix in an ATP-dependent manner. In the complex, it is required to stimulate activity of mtHSP70 (SSC1). The polypeptide is Mitochondrial import inner membrane translocase subunit TIM14 (PAM18) (Saccharomyces cerevisiae (strain ATCC 204508 / S288c) (Baker's yeast)).